Consider the following 152-residue polypeptide: Anaerobic nitrite reductase HBI (152 aa).

Residues A2–K151 form the Globin domain. Positions E35 to E39 match the Homodimerization motif. Heme b-binding residues include S45, K59, H63, R93, and H98. The Homodimerization motif lies at D105–G117.

It belongs to the plant globin family. As to quaternary structure, homodimer. The cofactor is heme b. In terms of tissue distribution, root nodules.

The protein resides in the cytoplasm. The protein localises to the nucleus. The enzyme catalyses Fe(III)-heme b-[protein] + nitric oxide + H2O = Fe(II)-heme b-[protein] + nitrite + 2 H(+). Functionally, phytoglobin that reduces nitrite to nitric oxide (NO) under anoxic conditions (e.g. during flooding or in waterlogged soil) and upon root nodulation. Required for general plant development and during nodulation, especially for the onset of symbiosis. Monitors nitric oxide (NO) levels during early phase of the nitrogen-fixing symbiosis and buffers oxygen in functioning nodules. May not function as an oxygen storage or transport protein. Has an unusually high affinity for O(2) through a hexacoordinate heme iron because of a very low dissociation constant. The sequence is that of Anaerobic nitrite reductase HBI from Casuarina glauca (Swamp oak).